Reading from the N-terminus, the 561-residue chain is MARRGSCSTICLNEKLQRFRIVRISDKADNFNSRSGSFFERSISLVLLLWCFLFLVYSKLGQSHDDYGNADRIGNYTDGSVSKTLNSTSSVFPQATEKENNFCLLRKGQLQDVYEHVLVNNALLICKVVLPERRISKKTLEARDPRYVNLEDKSLKVNGSSQLVNNGTRYRLEPDGNGYNYASAMKGAKVVDHNKEAKGASNVLGKDHDKYLRNPCSVSDKYVVIELAEETLVDTVRIANFEHYSSNPKEFSLSGSLSFPSDMWTPAGSFAAANVKQIQSFRLPEPKWLRYLKLNLVSHYGSEFYCTLSVVEVFGIDALEQMLEDLFVPSETPPSKPAMVELKTADEKQDGEIKSNRTDQIGKETEAQKKKDDVVKTINIIGDKKYEVKEKHNVLKVMMQKVKLIEMNLSLLEDSVKKMNDKQPEVSLEMKKTLVLVEKSKADIREITEWKGKMEKELRDLELWKTLVASRVESLARGNSALRLDVEKIVKEQANLESKELGVLLISLFFVVLATIRLVSTRLWAFLGMSITDKARSLWPDSGWVMILLSSSIMIFIHLLS.

The chain crosses the membrane as a helical span at residues 36–56 (GSFFERSISLVLLLWCFLFLV). Residues 158–318 (NGSSQLVNNG…SVVEVFGIDA (161 aa)) form the SUN domain. Residues 345 to 367 (ADEKQDGEIKSNRTDQIGKETEA) form a disordered region. Positions 454–499 (MEKELRDLELWKTLVASRVESLARGNSALRLDVEKIVKEQANLESK) form a coiled coil. Helical transmembrane passes span 501-521 (LGVL…LVST) and 540-560 (PDSG…IHLL).

As to quaternary structure, forms homomers. Interacts with SUN3 and TIK.

It localises to the membrane. In terms of biological role, encodes a member of the mid-SUN subfamily of SUN-domain proteins. It is involved in early seed development and nuclear morphology. [TAIR]. This is SUN domain-containing protein 5 from Arabidopsis thaliana (Mouse-ear cress).